The following is a 333-amino-acid chain: Biotin synthase (333 aa).

In terms of domain architecture, Radical SAM core spans 40-269 (YRVQLASLLS…HARVRLSAGR (230 aa)). Residues C55, C59, and C62 each contribute to the [4Fe-4S] cluster site. Positions 100, 132, 192, and 264 each coordinate [2Fe-2S] cluster.

This sequence belongs to the radical SAM superfamily. Biotin synthase family. Homodimer. It depends on [4Fe-4S] cluster as a cofactor. Requires [2Fe-2S] cluster as cofactor.

It carries out the reaction (4R,5S)-dethiobiotin + (sulfur carrier)-SH + 2 reduced [2Fe-2S]-[ferredoxin] + 2 S-adenosyl-L-methionine = (sulfur carrier)-H + biotin + 2 5'-deoxyadenosine + 2 L-methionine + 2 oxidized [2Fe-2S]-[ferredoxin]. The protein operates within cofactor biosynthesis; biotin biosynthesis; biotin from 7,8-diaminononanoate: step 2/2. Its function is as follows. Catalyzes the conversion of dethiobiotin (DTB) to biotin by the insertion of a sulfur atom into dethiobiotin via a radical-based mechanism. This Synechococcus sp. (strain CC9902) protein is Biotin synthase.